Consider the following 274-residue polypeptide: S-adenosylmethionine-dependent nucleotide dehydratase (274 aa).

The Radical SAM core domain occupies 1-215; it reads MAYKVNLHIT…VERHAEVSHD (215 aa). [4Fe-4S] cluster-binding residues include cysteine 13, cysteine 17, and cysteine 20.

It belongs to the radical SAM superfamily. Prokaryotic viperin family. It depends on [4Fe-4S] cluster as a cofactor.

The catalysed reaction is CTP + AH2 + S-adenosyl-L-methionine = 3'-deoxy-3',4'-didehydro-CTP + 5'-deoxyadenosine + L-methionine + A + H2O + H(+). Functionally, expression of pVip6 in E.coli (strain MG1655) confers resistance to phages lambda, P1, SECphi6, SECphi8 and T7. Catalyzes the conversion of cytidine triphosphate (CTP) to 3'-deoxy-3',4'-didehydro-CTP (ddhCTP), probably via a SAM-dependent radical mechanism. The modified nucleotide represses transcription from T7 RNA polymerase-directed genes (possibly by acting as chain terminators), strongly suggesting these nucleotides block viral polymerase transcription. This is S-adenosylmethionine-dependent nucleotide dehydratase from Selenomonas ruminantium.